Consider the following 32-residue polypeptide: MSDIN-like toxin proprotein 2 (32 aa).

Positions 1–10 are excised as a propeptide; sequence MSDINATRVP. Positions 11-17 form a cross-link, cyclopeptide (Ala-Pro); that stretch reads AWLAECP. Positions 18–32 are excised as a propeptide; that stretch reads CVGDDISHLLTRGEK.

It belongs to the MSDIN fungal toxin family. In terms of processing, processed by the macrocyclase-peptidase enzyme POPB to yield a toxic cyclic heptapeptide. POPB first removes 10 residues from the N-terminus. Conformational trapping of the remaining peptide forces the enzyme to release this intermediate rather than proceed to macrocyclization. The enzyme rebinds the remaining peptide in a different conformation and catalyzes macrocyclization of the N-terminal 7 residues.

Functionally, probable toxin that belongs to the MSDIN-like toxin family responsible for a large number of food poisoning cases and deaths. The protein is MSDIN-like toxin proprotein 2 of Amanita rimosa.